A 330-amino-acid polypeptide reads, in one-letter code: Exostosin-like 2 (330 aa).

Over 1-22 (MRCCHICKLPGRVMGIRVLRLS) the chain is Cytoplasmic. The chain crosses the membrane as a helical; Signal-anchor for type II membrane protein span at residues 23–43 (LVVILVLLLVAGALTALLPSV). The Lumenal portion of the chain corresponds to 44 to 330 (KEDKMLMLRR…FPYANYKRKI (287 aa)). Position 71 (Gln-71) interacts with UDP-N-acetyl-alpha-D-galactosamine. Gln-71 contributes to the UDP-N-acetyl-alpha-D-glucosamine binding site. N-linked (GlcNAc...) asparagine glycosylation occurs at Asn-74. Residues Arg-75, Asn-100, Asn-129, Arg-134, Asp-150, Asp-151, Asp-152, and Asp-244 each coordinate UDP-N-acetyl-alpha-D-galactosamine. UDP-N-acetyl-alpha-D-glucosamine contacts are provided by Arg-75, Asn-100, Asn-129, Arg-134, Asp-150, Asp-151, Asp-152, Asp-244, Asp-245, and Arg-293. Asp-152 contacts Mn(2+). The cysteines at positions 243 and 296 are disulfide-linked. Asp-245 is an active-site residue. Arg-293 contacts UDP-N-acetyl-alpha-D-galactosamine.

The protein belongs to the glycosyltransferase 47 family. Mn(2+) serves as cofactor. The soluble form derives from the membrane form by proteolytic processing. In terms of tissue distribution, ubiquitous.

It is found in the endoplasmic reticulum membrane. The protein localises to the secreted. The catalysed reaction is 3-O-(beta-D-GlcA-(1-&gt;3)-beta-D-Gal-(1-&gt;3)-beta-D-Gal-(1-&gt;4)-beta-D-Xyl)-L-seryl-[protein] + UDP-N-acetyl-alpha-D-glucosamine = 3-O-(alpha-D-GlcNAc-(1-&gt;4)-beta-D-GlcA-(1-&gt;3)-beta-D-Gal-(1-&gt;3)-beta-D-Gal-(1-&gt;4)-beta-D-Xyl)-L-seryl-[protein] + UDP + H(+). Its pathway is glycan metabolism; heparan sulfate biosynthesis. In terms of biological role, glycosyltransferase required for the biosynthesis of heparan-sulfate and responsible for the alternating addition of beta-1-4-linked glucuronic acid (GlcA) and alpha-1-4-linked N-acetylglucosamine (GlcNAc) units to nascent heparan sulfate chains. The sequence is that of Exostosin-like 2 (EXTL2) from Homo sapiens (Human).